A 144-amino-acid polypeptide reads, in one-letter code: UPF0179 protein PF1381 (144 aa).

Belongs to the UPF0179 family.

This chain is UPF0179 protein PF1381, found in Pyrococcus furiosus (strain ATCC 43587 / DSM 3638 / JCM 8422 / Vc1).